The chain runs to 179 residues: Phosphopantetheine adenylyltransferase (179 aa).

A substrate-binding site is contributed by Ser23. ATP-binding positions include 23-24 and His31; that span reads SF. Lys55, Ala87, and Arg101 together coordinate substrate. ATP is bound by residues 102–104, Glu112, and 137–143; these read GIR and FAHVSSS.

Belongs to the bacterial CoaD family. As to quaternary structure, homohexamer. Mg(2+) serves as cofactor.

It localises to the cytoplasm. It carries out the reaction (R)-4'-phosphopantetheine + ATP + H(+) = 3'-dephospho-CoA + diphosphate. It participates in cofactor biosynthesis; coenzyme A biosynthesis; CoA from (R)-pantothenate: step 4/5. Reversibly transfers an adenylyl group from ATP to 4'-phosphopantetheine, yielding dephospho-CoA (dPCoA) and pyrophosphate. This Rhodopirellula baltica (strain DSM 10527 / NCIMB 13988 / SH1) protein is Phosphopantetheine adenylyltransferase.